The primary structure comprises 423 residues: Glucose-1-phosphate adenylyltransferase (423 aa).

Alpha-D-glucose 1-phosphate contacts are provided by residues Y108, G173, 188-189, and S207; that span reads EK.

The protein belongs to the bacterial/plant glucose-1-phosphate adenylyltransferase family. Homotetramer.

It carries out the reaction alpha-D-glucose 1-phosphate + ATP + H(+) = ADP-alpha-D-glucose + diphosphate. It participates in glycan biosynthesis; glycogen biosynthesis. Functionally, involved in the biosynthesis of ADP-glucose, a building block required for the elongation reactions to produce glycogen. Catalyzes the reaction between ATP and alpha-D-glucose 1-phosphate (G1P) to produce pyrophosphate and ADP-Glc. This is Glucose-1-phosphate adenylyltransferase from Francisella tularensis subsp. tularensis (strain WY96-3418).